A 472-amino-acid chain; its full sequence is Glutamate-1-semialdehyde 2,1-aminomutase 2, chloroplastic (472 aa).

Residues 1 to 36 (MAATLTGSGIALGFSCSAKFSKRASSSSNRRCIKMS) constitute a chloroplast transit peptide. At Lys312 the chain carries N6-(pyridoxal phosphate)lysine.

The protein belongs to the class-III pyridoxal-phosphate-dependent aminotransferase family. HemL subfamily. As to quaternary structure, homodimer. Pyridoxal 5'-phosphate is required as a cofactor. Expressed in leaf primordia and shoot apical meristems (SAM).

The protein resides in the plastid. It is found in the chloroplast. The catalysed reaction is (S)-4-amino-5-oxopentanoate = 5-aminolevulinate. Its pathway is porphyrin-containing compound metabolism; protoporphyrin-IX biosynthesis; 5-aminolevulinate from L-glutamyl-tRNA(Glu): step 2/2. The protein operates within porphyrin-containing compound metabolism; chlorophyll biosynthesis. Its function is as follows. Transaminase converting glutamate 1-semialdehyde (GSA) to 5-aminolevulinate (ALA). Involved in the biosynthesis of tetrapyrroles. This chain is Glutamate-1-semialdehyde 2,1-aminomutase 2, chloroplastic, found in Arabidopsis thaliana (Mouse-ear cress).